We begin with the raw amino-acid sequence, 225 residues long: uncharacterized protein (225 aa).

A PCI domain is found at 166-214 (LNSDVIKDKILAIIENVGEITYEELAEKINIPEEDLEKYLSELKESGDI).

This is an uncharacterized protein from Methanocaldococcus jannaschii (strain ATCC 43067 / DSM 2661 / JAL-1 / JCM 10045 / NBRC 100440) (Methanococcus jannaschii).